Consider the following 466-residue polypeptide: Tyrosinase HcTyr1 (466 aa).

Positions 43, 78, 87, 211, 215, and 238 each coordinate Cu cation.

This sequence belongs to the tyrosinase family. Monomer. Formation of a dimer is observed when the protein is in its holo-form. It depends on Cu(2+) as a cofactor. In terms of processing, in vitro, the C-terminal lid-domain is slowly cleaved off in an autoprocessive time dependent manner, leading to the formation of cleaved-HcTyr1. The processing rate is not influenced by factors such as pH and added metal ions.

The enzyme catalyses L-tyrosine + O2 = L-dopaquinone + H2O. It carries out the reaction 2 L-tyrosine + O2 = 2 L-dopa. It catalyses the reaction 2 L-dopa + O2 = 2 L-dopaquinone + 2 H2O. Its activity is regulated as follows. Cleavage of the lid-domain increases activity levels, affinity for substrate and turnover rate. Exhibits high saline tolerance. Its function is as follows. Copper-containing oxidase that catalyzes the conversion of L-tyrosine to L-dopa and then to L-dopaquinone. Can use various phenols such as p-coumaric acid, phenol, pyrocatechol, syringol or pyrogallol. Accepts several of the constituents of lignin and potentially participates in lignin functionalization. This Hahella sp. (strain CCB-MM4) protein is Tyrosinase HcTyr1.